The primary structure comprises 517 residues: Crotonobetaine/carnitine--CoA ligase (517 aa).

The protein belongs to the ATP-dependent AMP-binding enzyme family.

The enzyme catalyses 4-(trimethylamino)butanoate + ATP + CoA = 4-(trimethylamino)butanoyl-CoA + AMP + diphosphate. It carries out the reaction crotonobetaine + ATP + CoA = crotonobetainyl-CoA + AMP + diphosphate. The catalysed reaction is (R)-carnitine + ATP + CoA = (R)-carnitinyl-CoA + AMP + diphosphate. It participates in amine and polyamine metabolism; carnitine metabolism. Its function is as follows. Catalyzes the transfer of CoA to carnitine, generating the initial carnitinyl-CoA needed for the CaiB reaction cycle. Also has activity toward crotonobetaine and gamma-butyrobetaine. This is Crotonobetaine/carnitine--CoA ligase from Salmonella paratyphi B (strain ATCC BAA-1250 / SPB7).